Consider the following 199-residue polypeptide: Heparin-binding hemagglutinin (199 aa).

The span at 162 to 180 (KAAPAKKAAPAKKAAPAKK) shows a compositional bias: low complexity. Residues 162–199 (KAAPAKKAAPAKKAAPAKKAAAKKAPAKKAAAKKVTQK) form a disordered region. Over residues 181–199 (AAAKKAPAKKAAAKKVTQK) the composition is skewed to basic residues.

It to M.leprae HbhA. In terms of processing, glycosylated. Glycosylation may protect the protein from proteolytic degradation and be important for hemagglutination. It suggests that the carbohydrate moiety may be located within the C-terminal domain of HbhA.

The protein resides in the cell surface. Its function is as follows. Required for extrapulmonary dissemination. Mediates adherence to epithelial cells by binding to sulfated glycoconjugates present at the surface of these cells. In Mycobacterium tuberculosis (strain CDC 1551 / Oshkosh), this protein is Heparin-binding hemagglutinin (hbhA).